The primary structure comprises 130 residues: Large ribosomal subunit protein bL12 (130 aa).

This sequence belongs to the bacterial ribosomal protein bL12 family. As to quaternary structure, homodimer. Part of the ribosomal stalk of the 50S ribosomal subunit. Forms a multimeric L10(L12)X complex, where L10 forms an elongated spine to which 2 to 4 L12 dimers bind in a sequential fashion. Binds GTP-bound translation factors.

Functionally, forms part of the ribosomal stalk which helps the ribosome interact with GTP-bound translation factors. Is thus essential for accurate translation. The protein is Large ribosomal subunit protein bL12 of Nostoc sp. (strain PCC 7120 / SAG 25.82 / UTEX 2576).